The following is a 264-amino-acid chain: ATP synthase subunit a (264 aa).

Helical transmembrane passes span 41–61, 99–119, 129–149, 156–176, 194–214, 217–237, and 238–258; these read ITNIGFYLTMGAFFLLIINLL, IYFPFIYALFIFILINNLIGM, HFVLTFALSFTIVLGATILGF, FFSLLVPAGCPLGLLPLLVLI, ANILSGHMLLHILAGFTYNIM, GIIFFFLGLIPLAFIIAFSGL, and ELGIAFIQAQVFVVLTSGYIK.

The protein belongs to the ATPase A chain family. F-type ATPases have 2 components, CF(1) - the catalytic core - and CF(0) - the membrane proton channel. CF(1) has five subunits: alpha(3), beta(3), gamma(1), delta(1), epsilon(1). CF(0) has three main subunits: a, b and c.

It localises to the mitochondrion inner membrane. Mitochondrial membrane ATP synthase (F(1)F(0) ATP synthase or Complex V) produces ATP from ADP in the presence of a proton gradient across the membrane which is generated by electron transport complexes of the respiratory chain. F-type ATPases consist of two structural domains, F(1) - containing the extramembraneous catalytic core and F(0) - containing the membrane proton channel, linked together by a central stalk and a peripheral stalk. During catalysis, ATP synthesis in the catalytic domain of F(1) is coupled via a rotary mechanism of the central stalk subunits to proton translocation. Key component of the proton channel; it may play a direct role in the translocation of protons across the membrane. The polypeptide is ATP synthase subunit a (ATP6) (Podospora anserina (strain S / ATCC MYA-4624 / DSM 980 / FGSC 10383) (Pleurage anserina)).